The following is a 331-amino-acid chain: Vitamin B12 import system permease protein BtuC (331 aa).

Helical transmembrane passes span 21 to 43 (LALL…ERWI), 63 to 85 (PRTL…MQAV), 90 to 112 (LAEP…TVLL), 116 to 138 (LLPV…FLLL), 151 to 173 (LLIG…YFST), 193 to 210 (WRHG…LWLS), and 239 to 261 (VLVL…IAFI).

This sequence belongs to the binding-protein-dependent transport system permease family. FecCD subfamily. The complex is composed of two ATP-binding proteins (BtuD), two transmembrane proteins (BtuC) and a solute-binding protein (BtuF).

Its subcellular location is the cell inner membrane. In terms of biological role, part of the ABC transporter complex BtuCDF involved in vitamin B12 import. Involved in the translocation of the substrate across the membrane. The polypeptide is Vitamin B12 import system permease protein BtuC (Pectobacterium atrosepticum (strain SCRI 1043 / ATCC BAA-672) (Erwinia carotovora subsp. atroseptica)).